Consider the following 307-residue polypeptide: MVQLQVFISGLLLLLPGSVDSYEVVKGVVGHPVTIPCTYSTRGGITTTCWGRGQCPYSSCQNILIWTNGYQVTYRSSGRYNIKGRISEGDVSLTIENSVDSDSGLYCCRVEIPGWFNDQKMTFSLEVKPEIPTSPPTRPTTTRPTTTRPTTISTRSTHVPTSTRVSTSTPTPEQTQTHKPEITTFYAHETTAEVTETPSYTPADWNGTVTSSEEAWNNHTVRIPLRKPQRNPTKGFYVGMSVAALLLLLLASTVVVTRYIIIRKKMGSLSFVAFHVSKSRALQNAAIVHPRAEDNIYIIEDRSRGAE.

Positions 1–21 are cleaved as a signal peptide; that stretch reads MVQLQVFISGLLLLLPGSVDS. An Ig-like V-type domain is found at 22–124; that stretch reads YEVVKGVVGH…WFNDQKMTFS (103 aa). The Extracellular segment spans residues 22-235; the sequence is YEVVKGVVGH…RKPQRNPTKG (214 aa). Cystine bridges form between Cys-37-Cys-108, Cys-49-Cys-60, and Cys-55-Cys-107. A disordered region spans residues 129 to 177; that stretch reads PEIPTSPPTRPTTTRPTTTRPTTISTRSTHVPTSTRVSTSTPTPEQTQT. Over residues 139 to 175 the composition is skewed to low complexity; it reads PTTTRPTTTRPTTISTRSTHVPTSTRVSTSTPTPEQT. Asn-206 carries an N-linked (GlcNAc...) asparagine glycan. The chain crosses the membrane as a helical span at residues 236–256; that stretch reads FYVGMSVAALLLLLLASTVVV. Over 257–307 the chain is Cytoplasmic; that stretch reads TRYIIIRKKMGSLSFVAFHVSKSRALQNAAIVHPRAEDNIYIIEDRSRGAE.

It belongs to the immunoglobulin superfamily. TIM family. In terms of assembly, interacts with STAM. Interacts with SELPLG. Expressed at a low level in normal kidney but are increased dramatically in postischemic kidney. Expressed in proliferating bromodeoxyuridine-positive and dedifferentiated vimentin-positive epithelial cells in regenerating proximal tubules.

The protein resides in the cell membrane. In terms of biological role, phosphatidylserine receptor that plays an important functional role in regulatory B-cells homeostasis including generation, expansion and suppressor functions. As P-selectin/SELPLG ligand, plays a specialized role in activated but not naive T-cell trafficking during inflammatory responses. Controls thereby T-cell accumulation in the inflamed central nervous system (CNS) and the induction of autoimmune disease. Also regulates expression of various anti-inflammatory cytokines and co-inhibitory ligands including IL10. Acts as a regulator of T-cell proliferation. May play a role in kidney injury and repair. This chain is Hepatitis A virus cellular receptor 1 homolog (Havcr1), found in Rattus norvegicus (Rat).